A 156-amino-acid polypeptide reads, in one-letter code: Probable chemoreceptor glutamine deamidase CheD (156 aa).

This sequence belongs to the CheD family.

The enzyme catalyses L-glutaminyl-[protein] + H2O = L-glutamyl-[protein] + NH4(+). Probably deamidates glutamine residues to glutamate on methyl-accepting chemotaxis receptors (MCPs), playing an important role in chemotaxis. This Sulfurimonas denitrificans (strain ATCC 33889 / DSM 1251) (Thiomicrospira denitrificans (strain ATCC 33889 / DSM 1251)) protein is Probable chemoreceptor glutamine deamidase CheD.